A 185-amino-acid polypeptide reads, in one-letter code: Putative lipoprotein LprB (185 aa).

Residues 1 to 24 (MRRKVRRLTLAVSALVALFPAVAG) form the signal peptide. C25 carries N-palmitoyl cysteine lipidation. C25 carries the S-diacylglycerol cysteine lipid modification. A disordered region spans residues 26-50 (SDSGDNKPGATIPSTPANAEGRHGP).

The protein resides in the cell membrane. This chain is Putative lipoprotein LprB (lprB), found in Mycobacterium bovis (strain ATCC BAA-935 / AF2122/97).